A 350-amino-acid polypeptide reads, in one-letter code: Putative isomerase YbhH (350 aa).

The protein belongs to the PrpF family.

The sequence is that of Putative isomerase YbhH (ybhH) from Escherichia coli O6:H1 (strain CFT073 / ATCC 700928 / UPEC).